A 262-amino-acid polypeptide reads, in one-letter code: 3-methyl-2-oxobutanoate hydroxymethyltransferase (262 aa).

Residues aspartate 42 and aspartate 81 each contribute to the Mg(2+) site. Residues aspartate 42 to serine 43, aspartate 81, and lysine 110 contribute to the 3-methyl-2-oxobutanoate site. Position 112 (glutamate 112) interacts with Mg(2+). Glutamate 180 functions as the Proton acceptor in the catalytic mechanism.

This sequence belongs to the PanB family. Homodecamer; pentamer of dimers. Mg(2+) is required as a cofactor.

Its subcellular location is the cytoplasm. It catalyses the reaction 3-methyl-2-oxobutanoate + (6R)-5,10-methylene-5,6,7,8-tetrahydrofolate + H2O = 2-dehydropantoate + (6S)-5,6,7,8-tetrahydrofolate. It functions in the pathway cofactor biosynthesis; (R)-pantothenate biosynthesis; (R)-pantoate from 3-methyl-2-oxobutanoate: step 1/2. Catalyzes the reversible reaction in which hydroxymethyl group from 5,10-methylenetetrahydrofolate is transferred onto alpha-ketoisovalerate to form ketopantoate. This Legionella pneumophila subsp. pneumophila (strain Philadelphia 1 / ATCC 33152 / DSM 7513) protein is 3-methyl-2-oxobutanoate hydroxymethyltransferase.